The sequence spans 351 residues: MIIQRVVLNSRPGKNGNPVAENFRVEEFSLPDALNEGQVQVRTLYLSVDPYMRCKMNEDTGTDYLAPWQLAQVADGGGIGVVEESKHQKLTKGDFVTSFYWPWQTKAILDGNGLEKVDPQLVDGHLSYFLGAIGMPGLTSLIGVQEKGHISAGSNQTMVVSGAAGACGSLAGQIGHLLGCSRVVGICGTQEKCLFLTSELGFDAAVNYKTGNVAEQLREACPGGVDVYFDNVGGDISNAVISQMNENSHIILCGQISQYSNDVPYPPPLPPAVEAIRKERNITRERFTVLNYKDKFEPGILQLSQWFKEGKLKVKETMAKGLENMGVAFQSMMTGGNVGKQIVCISEDSSL.

Phe99 to Tyr100 lines the substrate pocket. Residues Gly165–Gly168, Lys192, Tyr208, Asn231, Cys253–Tyr259, Phe287–Val289, and Asn337 each bind NADP(+). Residue Thr288–Leu290 participates in substrate binding.

This sequence belongs to the NADP-dependent oxidoreductase L4BD family. Monomer. As to expression, widely expressed with highest levels in adipose tissues.

It is found in the cytoplasm. The catalysed reaction is 13,14-dihydro-15-oxo-prostaglandin E2 + NAD(+) = 15-oxoprostaglandin E2 + NADH + H(+). It catalyses the reaction 13,14-dihydro-15-oxo-prostaglandin E2 + NADP(+) = 15-oxoprostaglandin E2 + NADPH + H(+). The enzyme catalyses 13,14-dihydro-15-oxo-PGF2alpha + NADP(+) = 15-oxoprostaglandin F2alpha + NADPH + H(+). It carries out the reaction 13,14-dihydro-15-oxo-prostaglandin E1 + NADP(+) = 15-oxoprostaglandin E1 + NADPH + H(+). The catalysed reaction is 13,14-dihydro-15-oxo-prostaglandin F1alpha + NADP(+) = 15-oxoprostaglandin F1alpha + NADPH + H(+). In terms of biological role, functions as 15-oxo-prostaglandin 13-reductase and acts on 15-keto-PGE1, 15-keto-PGE2, 15-keto-PGE1-alpha and 15-keto-PGE2-alpha with highest activity towards 15-keto-PGE2. Overexpression represses transcriptional activity of PPARG and inhibits adipocyte differentiation. The protein is Prostaglandin reductase 2 of Mus musculus (Mouse).